An 824-amino-acid polypeptide reads, in one-letter code: Probable acyl-CoA dehydrogenase IBR3 (824 aa).

G2 carries the N-acetylglycine modification. Residues 555–565 (FAMTEPQVASS), 589–591 (WTS), R706, Q776, and 776–780 (QVHGA) contribute to the FAD site. The short motif at 822–824 (SKL) is the Microbody targeting signal element.

Belongs to the acyl-CoA dehydrogenase family. The cofactor is FAD.

Its subcellular location is the peroxisome. It carries out the reaction a 2,3-saturated acyl-CoA + A = a 2,3-dehydroacyl-CoA + AH2. Functionally, involved with IBR1 and IBR10 in the peroxisomal beta-oxidation of indole-3-butyric acid (IBA) to form indole-3-acetic acid (IAA), a biologically active auxin. May be responsible for catalyzing the first step in IBA-CoA beta-oxidation. May play a role in defense response to pathogenic bacteria. This is Probable acyl-CoA dehydrogenase IBR3 from Arabidopsis thaliana (Mouse-ear cress).